Consider the following 33-residue polypeptide: MSDINATRLPLILLAALGIPSDDADSTLTRGER.

The propeptide occupies 1 to 10 (MSDINATRLP). The cyclopeptide (Leu-Pro) cross-link spans 11 to 20 (LILLAALGIP). A propeptide spanning residues 21-33 (SDDADSTLTRGER) is cleaved from the precursor.

It belongs to the MSDIN fungal toxin family. In terms of processing, processed by the macrocyclase-peptidase enzyme POPB to yield a toxic cyclic decapeptide. POPB first removes 10 residues from the N-terminus. Conformational trapping of the remaining peptide forces the enzyme to release this intermediate rather than proceed to macrocyclization. The enzyme rebinds the remaining peptide in a different conformation and catalyzes macrocyclization of the N-terminal 10 residues.

Probable toxin that belongs to the MSDIN-like toxin family responsible for a large number of food poisoning cases and deaths. In Amanita phalloides (Death cap), this protein is MSDIN-like toxin proprotein 6.